Here is a 171-residue protein sequence, read N- to C-terminus: Dual specificity protein phosphatase OPG106 (171 aa).

The 149-residue stretch at 23–171 (SPTIMTRVTN…IIEKYVIDKN (149 aa)) folds into the Tyrosine-protein phosphatase domain. C110 acts as the Phosphocysteine intermediate in catalysis.

This sequence belongs to the protein-tyrosine phosphatase family. Non-receptor class dual specificity subfamily. Homodimer.

Its subcellular location is the virion. The protein localises to the host cytoplasm. The catalysed reaction is O-phospho-L-tyrosyl-[protein] + H2O = L-tyrosyl-[protein] + phosphate. It catalyses the reaction O-phospho-L-seryl-[protein] + H2O = L-seryl-[protein] + phosphate. Inhibited by NSC-62914, NSC-28086, NSC-105687, NSC-23173, 540211 and 217691 with IC50 values of 48, 51, 212, 342, 4 and 11 uM, respectively. Functionally, serine/tyrosine phosphatase which down-regulates cellular antiviral response by dephosphorylating activated host STAT1 and blocking interferon (IFN)-stimulated innate immune responses. Dephosphorylates the OPG144 protein. The protein is Dual specificity protein phosphatase OPG106 (OPG106) of Homo sapiens (Human).